Reading from the N-terminus, the 222-residue chain is 2-C-methyl-D-erythritol 4-phosphate cytidylyltransferase (222 aa).

Belongs to the IspD/TarI cytidylyltransferase family. IspD subfamily.

It catalyses the reaction 2-C-methyl-D-erythritol 4-phosphate + CTP + H(+) = 4-CDP-2-C-methyl-D-erythritol + diphosphate. Its pathway is isoprenoid biosynthesis; isopentenyl diphosphate biosynthesis via DXP pathway; isopentenyl diphosphate from 1-deoxy-D-xylulose 5-phosphate: step 2/6. Functionally, catalyzes the formation of 4-diphosphocytidyl-2-C-methyl-D-erythritol from CTP and 2-C-methyl-D-erythritol 4-phosphate (MEP). In Thermotoga maritima (strain ATCC 43589 / DSM 3109 / JCM 10099 / NBRC 100826 / MSB8), this protein is 2-C-methyl-D-erythritol 4-phosphate cytidylyltransferase.